The following is a 116-amino-acid chain: Ribosome-binding factor A (116 aa).

The protein belongs to the RbfA family. In terms of assembly, monomer. Binds 30S ribosomal subunits, but not 50S ribosomal subunits or 70S ribosomes.

It is found in the cytoplasm. Its function is as follows. One of several proteins that assist in the late maturation steps of the functional core of the 30S ribosomal subunit. Associates with free 30S ribosomal subunits (but not with 30S subunits that are part of 70S ribosomes or polysomes). Required for efficient processing of 16S rRNA. May interact with the 5'-terminal helix region of 16S rRNA. The chain is Ribosome-binding factor A from Clostridium perfringens (strain 13 / Type A).